The primary structure comprises 307 residues: Protoheme IX farnesyltransferase (307 aa).

Helical transmembrane passes span 29 to 49 (VISL…RGWP), 51 to 71 (LGLL…AGVF), 101 to 120 (AAIF…WVWA), 124 to 143 (AAWM…TLWL), 151 to 171 (IVLG…AVTG), 179 to 199 (FLFA…ALMI), 218 to 238 (RLTV…SVMP), 239 to 259 (VFLG…GWLL), and 280 to 300 (VAVP…VAGA).

The protein belongs to the UbiA prenyltransferase family. Protoheme IX farnesyltransferase subfamily.

It is found in the cell membrane. The catalysed reaction is heme b + (2E,6E)-farnesyl diphosphate + H2O = Fe(II)-heme o + diphosphate. Its pathway is porphyrin-containing compound metabolism; heme O biosynthesis; heme O from protoheme: step 1/1. Converts heme B (protoheme IX) to heme O by substitution of the vinyl group on carbon 2 of heme B porphyrin ring with a hydroxyethyl farnesyl side group. The polypeptide is Protoheme IX farnesyltransferase (Deinococcus geothermalis (strain DSM 11300 / CIP 105573 / AG-3a)).